The following is an 832-amino-acid chain: Alpha-glucan phosphorylase, H isozyme (832 aa).

K678 bears the N6-(pyridoxal phosphate)lysine mark.

It belongs to the glycogen phosphorylase family. The cofactor is pyridoxal 5'-phosphate.

Its subcellular location is the cytoplasm. The catalysed reaction is [(1-&gt;4)-alpha-D-glucosyl](n) + phosphate = [(1-&gt;4)-alpha-D-glucosyl](n-1) + alpha-D-glucose 1-phosphate. Its function is as follows. Phosphorylase is an important allosteric enzyme in carbohydrate metabolism. Enzymes from different sources differ in their regulatory mechanisms and in their natural substrates. However, all known phosphorylases share catalytic and structural properties. The polypeptide is Alpha-glucan phosphorylase, H isozyme (Triticum aestivum (Wheat)).